Here is a 603-residue protein sequence, read N- to C-terminus: Ribosome-inactivating protein PMRIPt (603 aa).

A signal peptide spans 1-39 (MRVVAGILYIVVMAICGLGIQGGTLQDYPSVYFQDSTLQ). Asn-74 and Asn-168 each carry an N-linked (GlcNAc...) asparagine glycan. Residue Glu-208 is part of the active site. Cystine bridges form between Cys-297/Cys-335, Cys-351/Cys-370, and Cys-392/Cys-409. 2 consecutive Ricin B-type lectin domains span residues 338–466 (GEPT…VGDD) and 467–593 (VEPI…WMTM). One copy of the 1-alpha repeat lies at 348–388 (DGLCMDVRNESNNDGIPIQLWPCGAQRNQQWTFHTDGTIQS). 2 N-linked (GlcNAc...) asparagine glycosylation sites follow: Asn-356 and Asn-408. The 1-beta repeat unit spans residues 389 to 430 (MGKCMTSNGYHPGDYVMIFNCSTAPVPDATKWVVSIDGSITN). One copy of the 1-gamma repeat lies at 433 to 466 (SGLVLTAPQAAQTTILLVVRNTHSAKQGRSVGDD). One copy of the 2-alpha repeat lies at 478 to 516 (KYMCLQGNNENNTRVWLEDCAVDRPQQWWALYSDGTIRV). Disulfide bonds link Cys-481–Cys-497 and Cys-523–Cys-540. N-linked (GlcNAc...) asparagine glycosylation occurs at Asn-488. One copy of the 2-beta repeat lies at 520-558 (RSLCVTSDGHSSRDAIIILTCDGGINQRLVFNTDGTILN). A 2-gamma repeat occupies 561-597 (AQLVMDVRQSNVALRQIILYQPTGNPNQQWMTMITRT).

It belongs to the ribosome-inactivating protein family. Type 2 RIP subfamily. As to quaternary structure, tetramer of four pairs of disulfide bound A-B chains. In terms of processing, the precursor is processed in two chains, A and B, that are linked by a disulfide bond. Post-translationally, glycosylated. Expressed in rhizome and more abundantly in leaves (at protein level).

The catalysed reaction is Endohydrolysis of the N-glycosidic bond at one specific adenosine on the 28S rRNA.. Its activity is regulated as follows. Strongly inhibited by asialofetuin and asialomucin. In terms of biological role, galNAc-specific agglutinin. Behaves as a type-2 ribosome-inactivating protein. Inhibits mammalian ribosomes. The A chain is responsible for inhibiting protein synthesis through the catalytic inactivation of 60S ribosomal subunits by removing adenine from position 4,324 of 28S rRNA. The B chain binds to cell receptors and probably facilitates the entry into the cell of the A chain; B chains are also responsible for cell agglutination (lectin activity). Involved in plant defense against insects. Has very low cytotoxic activity against the human tumor cell lines CEM and Molt4. This Polygonatum multiflorum (Solomon's seal) protein is Ribosome-inactivating protein PMRIPt.